Reading from the N-terminus, the 151-residue chain is 3-dehydroquinate dehydratase (151 aa).

The active-site Proton acceptor is Tyr-24. Residues Asn-76, His-82, and Asp-89 each contribute to the substrate site. The active-site Proton donor is His-102. Substrate is bound by residues 103–104 (VS) and Arg-113.

This sequence belongs to the type-II 3-dehydroquinase family. In terms of assembly, homododecamer.

The enzyme catalyses 3-dehydroquinate = 3-dehydroshikimate + H2O. The protein operates within metabolic intermediate biosynthesis; chorismate biosynthesis; chorismate from D-erythrose 4-phosphate and phosphoenolpyruvate: step 3/7. Catalyzes a trans-dehydration via an enolate intermediate. In Rhodopseudomonas palustris (strain ATCC BAA-98 / CGA009), this protein is 3-dehydroquinate dehydratase.